Consider the following 92-residue polypeptide: Small ribosomal subunit protein uS19 (92 aa).

The protein belongs to the universal ribosomal protein uS19 family.

Its function is as follows. Protein S19 forms a complex with S13 that binds strongly to the 16S ribosomal RNA. This Rhizobium etli (strain CIAT 652) protein is Small ribosomal subunit protein uS19.